The following is a 188-amino-acid chain: Elongation factor P (188 aa).

The protein belongs to the elongation factor P family.

It is found in the cytoplasm. Its pathway is protein biosynthesis; polypeptide chain elongation. In terms of biological role, involved in peptide bond synthesis. Stimulates efficient translation and peptide-bond synthesis on native or reconstituted 70S ribosomes in vitro. Probably functions indirectly by altering the affinity of the ribosome for aminoacyl-tRNA, thus increasing their reactivity as acceptors for peptidyl transferase. The polypeptide is Elongation factor P (Sulfurovum sp. (strain NBC37-1)).